Reading from the N-terminus, the 348-residue chain is Phosphoribosylformylglycinamidine cyclo-ligase (348 aa).

Belongs to the AIR synthase family.

It is found in the cytoplasm. It catalyses the reaction 2-formamido-N(1)-(5-O-phospho-beta-D-ribosyl)acetamidine + ATP = 5-amino-1-(5-phospho-beta-D-ribosyl)imidazole + ADP + phosphate + H(+). It participates in purine metabolism; IMP biosynthesis via de novo pathway; 5-amino-1-(5-phospho-D-ribosyl)imidazole from N(2)-formyl-N(1)-(5-phospho-D-ribosyl)glycinamide: step 2/2. This Ruegeria sp. (strain TM1040) (Silicibacter sp.) protein is Phosphoribosylformylglycinamidine cyclo-ligase.